A 258-amino-acid polypeptide reads, in one-letter code: Tryptophan synthase alpha chain (258 aa).

Catalysis depends on proton acceptor residues Glu52 and Asp63.

It belongs to the TrpA family. In terms of assembly, tetramer of two alpha and two beta chains.

The enzyme catalyses (1S,2R)-1-C-(indol-3-yl)glycerol 3-phosphate + L-serine = D-glyceraldehyde 3-phosphate + L-tryptophan + H2O. The protein operates within amino-acid biosynthesis; L-tryptophan biosynthesis; L-tryptophan from chorismate: step 5/5. Functionally, the alpha subunit is responsible for the aldol cleavage of indoleglycerol phosphate to indole and glyceraldehyde 3-phosphate. The chain is Tryptophan synthase alpha chain from Streptococcus pneumoniae (strain P1031).